A 101-amino-acid chain; its full sequence is ATP synthase subunit c (101 aa).

2 helical membrane passes run 31-51 (AFAY…GAGQ) and 81-101 (AISE…IFVG).

Belongs to the ATPase C chain family. As to quaternary structure, F-type ATPases have 2 components, F(1) - the catalytic core - and F(0) - the membrane proton channel. F(1) has five subunits: alpha(3), beta(3), gamma(1), delta(1), epsilon(1). F(0) has three main subunits: a(1), b(2) and c(10-14). The alpha and beta chains form an alternating ring which encloses part of the gamma chain. F(1) is attached to F(0) by a central stalk formed by the gamma and epsilon chains, while a peripheral stalk is formed by the delta and b chains.

It is found in the cell membrane. Functionally, f(1)F(0) ATP synthase produces ATP from ADP in the presence of a proton or sodium gradient. F-type ATPases consist of two structural domains, F(1) containing the extramembraneous catalytic core and F(0) containing the membrane proton channel, linked together by a central stalk and a peripheral stalk. During catalysis, ATP synthesis in the catalytic domain of F(1) is coupled via a rotary mechanism of the central stalk subunits to proton translocation. Its function is as follows. Key component of the F(0) channel; it plays a direct role in translocation across the membrane. A homomeric c-ring of between 10-14 subunits forms the central stalk rotor element with the F(1) delta and epsilon subunits. The chain is ATP synthase subunit c from Mesomycoplasma hyopneumoniae (strain 7448) (Mycoplasma hyopneumoniae).